Reading from the N-terminus, the 30-residue chain is GIPCGESCVWIPCLTSAIGCSCKSKVCYRD.

Positions 1 to 30 form a cross-link, cyclopeptide (Gly-Asp); the sequence is GIPCGESCVWIPCLTSAIGCSCKSKVCYRD. 3 disulfides stabilise this stretch: Cys-4–Cys-20, Cys-8–Cys-22, and Cys-13–Cys-27.

Post-translationally, this is a cyclic peptide.

Its function is as follows. Probably participates in a plant defense mechanism. The polypeptide is Cycloviolacin-O20 (Viola odorata (Sweet violet)).